A 131-amino-acid chain; its full sequence is C-type natriuretic peptide 1 (131 aa).

Residues 1-22 (MLYPALLCAALLLIAPLGHTEG) form the signal peptide. Positions 23 to 109 (RTLHPSPDAI…KRAVMDRSRR (87 aa)) are excised as a propeptide. Cys-115 and Cys-131 are joined by a disulfide.

Belongs to the natriuretic peptide family. Expressed in brain and to a low extent in atrium.

Its subcellular location is the secreted. In terms of biological role, exhibits natriuretic and vasodepressant activity. Has a cGMP-stimulating activity. In Oncorhynchus mykiss (Rainbow trout), this protein is C-type natriuretic peptide 1.